The following is a 148-amino-acid chain: Proline-rich protein 13 (148 aa).

Positions 1-148 are disordered; that stretch reads MWNPNAGQPG…SSSSSSSDSD (148 aa). Pro residues-rich tracts occupy residues 27–67 and 75–93; these read AHPP…PQPG and GPYPPPYPPPAPGIPPVNP. The span at 109–135 shows a compositional bias: basic residues; it reads MQKKMKKAHKKMHKHQKHHKYHKHGKH. The segment covering 136–148 has biased composition (low complexity); it reads SSSSSSSSSSDSD.

The protein localises to the nucleus. Negatively regulates TSP1 expression at the level of transcription. This down-regulation was shown to reduce taxane-induced apoptosis. The protein is Proline-rich protein 13 (PRR13) of Homo sapiens (Human).